Here is a 283-residue protein sequence, read N- to C-terminus: Protein FAM170B (283 aa).

Positions 1–11 (MKCYFTDHRGE) are enriched in basic and acidic residues. 2 disordered regions span residues 1–58 (MKCY…REEG) and 246–283 (AQGQAHDQQLEEEQSPSDNSECSRPQGEVLSAQQQEKQ).

It belongs to the FAM170 family. As to quaternary structure, interacts with GOPC. In terms of tissue distribution, exclusively expressed in adult testis.

The protein localises to the cytoplasmic vesicle. It localises to the secretory vesicle. It is found in the acrosome. Its subcellular location is the acrosome outer membrane. Plays a role in fertilization through the acrosome reaction. This Homo sapiens (Human) protein is Protein FAM170B.